We begin with the raw amino-acid sequence, 511 residues long: ATP synthase subunit alpha 2 (511 aa).

173 to 180 (GDRQTGKS) provides a ligand contact to ATP.

The protein belongs to the ATPase alpha/beta chains family. F-type ATPases have 2 components, CF(1) - the catalytic core - and CF(0) - the membrane proton channel. CF(1) has five subunits: alpha(3), beta(3), gamma(1), delta(1), epsilon(1). CF(0) has three main subunits: a(1), b(2) and c(9-12). The alpha and beta chains form an alternating ring which encloses part of the gamma chain. CF(1) is attached to CF(0) by a central stalk formed by the gamma and epsilon chains, while a peripheral stalk is formed by the delta and b chains.

It is found in the cell inner membrane. The catalysed reaction is ATP + H2O + 4 H(+)(in) = ADP + phosphate + 5 H(+)(out). Produces ATP from ADP in the presence of a proton gradient across the membrane. The alpha chain is a regulatory subunit. The protein is ATP synthase subunit alpha 2 of Nitrosospira multiformis (strain ATCC 25196 / NCIMB 11849 / C 71).